We begin with the raw amino-acid sequence, 721 residues long: Polyphosphate kinase (721 aa).

Asparagine 47 lines the ATP pocket. Mg(2+) contacts are provided by arginine 377 and arginine 407. The Phosphohistidine intermediate role is filled by histidine 437. The ATP site is built by tyrosine 471, arginine 567, and histidine 595.

This sequence belongs to the polyphosphate kinase 1 (PPK1) family. Requires Mg(2+) as cofactor. An intermediate of this reaction is the autophosphorylated ppk in which a phosphate is covalently linked to a histidine residue through a N-P bond.

The catalysed reaction is [phosphate](n) + ATP = [phosphate](n+1) + ADP. Catalyzes the reversible transfer of the terminal phosphate of ATP to form a long-chain polyphosphate (polyP). The polypeptide is Polyphosphate kinase (Exiguobacterium sp. (strain ATCC BAA-1283 / AT1b)).